The primary structure comprises 357 residues: Protein-arginine kinase (357 aa).

The Phosphagen kinase C-terminal domain maps to 24–255 (IVISTRLRIA…RQIIEQERVA (232 aa)). ATP is bound by residues 27 to 31 (STRLR), His-92, Arg-126, 177 to 181 (RASVM), and 208 to 213 (RGIYGE). An RDXXRA motif of the pArg binding pocket involved in allosteric regulation motif is present at residues 338-343 (RDERRA).

It belongs to the ATP:guanido phosphotransferase family.

The catalysed reaction is L-arginyl-[protein] + ATP = N(omega)-phospho-L-arginyl-[protein] + ADP + H(+). Appears to be allosterically activated by the binding of pArg-containing polypeptides to the pArg-binding pocket localized in the C-terminal domain of McsB. In terms of biological role, catalyzes the specific phosphorylation of arginine residues in proteins. The protein is Protein-arginine kinase of Brevibacillus brevis (strain 47 / JCM 6285 / NBRC 100599).